We begin with the raw amino-acid sequence, 251 residues long: Triosephosphate isomerase (251 aa).

9 to 11 (NWK) serves as a coordination point for substrate. The active-site Electrophile is His-95. Residue Glu-167 is the Proton acceptor of the active site. Residues Gly-173, Ser-213, and 234–235 (GG) each bind substrate.

This sequence belongs to the triosephosphate isomerase family. In terms of assembly, homodimer.

Its subcellular location is the cytoplasm. It catalyses the reaction D-glyceraldehyde 3-phosphate = dihydroxyacetone phosphate. Its pathway is carbohydrate biosynthesis; gluconeogenesis. It functions in the pathway carbohydrate degradation; glycolysis; D-glyceraldehyde 3-phosphate from glycerone phosphate: step 1/1. In terms of biological role, involved in the gluconeogenesis. Catalyzes stereospecifically the conversion of dihydroxyacetone phosphate (DHAP) to D-glyceraldehyde-3-phosphate (G3P). The sequence is that of Triosephosphate isomerase from Fusobacterium nucleatum subsp. nucleatum (strain ATCC 25586 / DSM 15643 / BCRC 10681 / CIP 101130 / JCM 8532 / KCTC 2640 / LMG 13131 / VPI 4355).